Consider the following 204-residue polypeptide: ATP-dependent Clp protease proteolytic subunit (204 aa).

Catalysis depends on S102, which acts as the Nucleophile. Residue H127 is part of the active site.

This sequence belongs to the peptidase S14 family. Fourteen ClpP subunits assemble into 2 heptameric rings which stack back to back to give a disk-like structure with a central cavity, resembling the structure of eukaryotic proteasomes.

The protein localises to the cytoplasm. The catalysed reaction is Hydrolysis of proteins to small peptides in the presence of ATP and magnesium. alpha-casein is the usual test substrate. In the absence of ATP, only oligopeptides shorter than five residues are hydrolyzed (such as succinyl-Leu-Tyr-|-NHMec, and Leu-Tyr-Leu-|-Tyr-Trp, in which cleavage of the -Tyr-|-Leu- and -Tyr-|-Trp bonds also occurs).. Functionally, cleaves peptides in various proteins in a process that requires ATP hydrolysis. Has a chymotrypsin-like activity. Plays a major role in the degradation of misfolded proteins. The sequence is that of ATP-dependent Clp protease proteolytic subunit from Neisseria meningitidis serogroup C (strain 053442).